The primary structure comprises 85 residues: Large ribosomal subunit protein bL27 (85 aa).

The protein belongs to the bacterial ribosomal protein bL27 family.

This Persephonella marina (strain DSM 14350 / EX-H1) protein is Large ribosomal subunit protein bL27.